A 127-amino-acid chain; its full sequence is MFNTLLAVFIGGGVGSMARWLVSLKLNSASAHLPVGTLIVNLVGAFIIGLTLAFFSRMTHIDPVWKLLITTGFCGGLTTFSTFSVEVVYLIQEGKLAWAAGTILLNVAGSLAMTMLAFILVNNFASQ.

Transmembrane regions (helical) follow at residues Thr4–Leu24, Val35–Phe55, Thr71–Ile91, and Gly101–Val121. 2 residues coordinate Na(+): Gly75 and Thr78.

The protein belongs to the fluoride channel Fluc/FEX (TC 1.A.43) family.

The protein localises to the cell inner membrane. It carries out the reaction fluoride(in) = fluoride(out). Its activity is regulated as follows. Na(+) is not transported, but it plays an essential structural role and its presence is essential for fluoride channel function. In terms of biological role, fluoride-specific ion channel. Important for reducing fluoride concentration in the cell, thus reducing its toxicity. This chain is Fluoride-specific ion channel FluC 1, found in Yersinia pestis.